A 209-amino-acid polypeptide reads, in one-letter code: MHRQLRYAVLATALFASTAFAGARQELDTFTRGLKGLDGQFSQRVTDANGRVKETSSGRVALATPRQFRWEYAKPYKQLIVADGKKVWVFDPDLEQVTVRAQGSEEQNSPLVALIDPALLDKKYDVSEEAAPRDGLQWLSLTPKVDTDASFQIASLGFGREGLARMEVVDAVGQRTAIGFSGWKRNPAFAADTFRYTPAKGVDVVGDAQ.

The first 21 residues, 1 to 21, serve as a signal peptide directing secretion; it reads MHRQLRYAVLATALFASTAFA.

This sequence belongs to the LolA family. As to quaternary structure, monomer.

The protein resides in the periplasm. In terms of biological role, participates in the translocation of lipoproteins from the inner membrane to the outer membrane. Only forms a complex with a lipoprotein if the residue after the N-terminal Cys is not an aspartate (The Asp acts as a targeting signal to indicate that the lipoprotein should stay in the inner membrane). The protein is Outer-membrane lipoprotein carrier protein of Xanthomonas axonopodis pv. citri (strain 306).